The following is a 428-amino-acid chain: Probable oxidoreductase OrdL (428 aa).

The polypeptide is Probable oxidoreductase OrdL (ordL) (Rhizobium meliloti (strain 1021) (Ensifer meliloti)).